Reading from the N-terminus, the 132-residue chain is Chemokine-like protein TAFA-5 (132 aa).

The signal sequence occupies residues 1–43 (MAPSPRTGSRQDATALPSMSSTFWAFMILASLLIAYCSQLAAG). Asparagine 113 carries N-linked (GlcNAc...) asparagine glycosylation.

The protein belongs to the TAFA family.

It localises to the secreted. In terms of biological role, acts as a chemokine-like protein by regulating cell proliferation and migration through activation of G protein-coupled receptors (GPCRs), such as S1PR2 and FPR2. Stimulates chemotactic migration of macrophages mediated by the MAPK3/ERK1 and AKT1 pathway. Blocks TNFSF11/RANKL-induced osteoclast formation from macrophages by inhibiting up-regulation of osteoclast fusogenic and differentiation genes. Stimulation of macrophage migration and inhibition of osteoclast formation is mediated through the GPCR FPR2. Acts as an adipokine by negatively regulating vascular smooth muscle cell (VSMC) proliferation and migration in response to platelet-derived growth factor stimulation via GPCR S1PR2 and G protein GNA12/GNA13-transmitted RHOA signaling. Inhibits injury-induced cell proliferation and neointima formation in the femoral arteries. This is Chemokine-like protein TAFA-5 (TAFA5) from Bos taurus (Bovine).